A 129-amino-acid polypeptide reads, in one-letter code: UPF0344 protein SSP1805 (129 aa).

Transmembrane regions (helical) follow at residues 1–21, 36–56, 68–88, and 100–120; these read MLHMHIASWVLLIILFFAAYF, IHMLLRLFMLLVLISGFWVWI, MLLTLKMICGVAVVALMEVTI, and LMWTTIVVIILTMIIGIILPM.

It belongs to the UPF0344 family.

The protein localises to the cell membrane. This Staphylococcus saprophyticus subsp. saprophyticus (strain ATCC 15305 / DSM 20229 / NCIMB 8711 / NCTC 7292 / S-41) protein is UPF0344 protein SSP1805.